Reading from the N-terminus, the 334-residue chain is GTPase Obg (334 aa).

One can recognise an Obg domain in the interval 1–159; it reads MRFVDEVVIK…KEVRLELNLL (159 aa). The OBG-type G domain occupies 160–331; sequence ADIALLGLPN…LAKKLNEFLH (172 aa). GTP contacts are provided by residues 166-173, 191-195, 212-215, 282-285, and 312-314; these read GLPNAGKS, FTTMY, DIPG, NKID, and SAA. Residues serine 173 and threonine 193 each coordinate Mg(2+).

It belongs to the TRAFAC class OBG-HflX-like GTPase superfamily. OBG GTPase family. In terms of assembly, monomer. The cofactor is Mg(2+).

It is found in the cytoplasm. In terms of biological role, an essential GTPase which binds GTP, GDP and possibly (p)ppGpp with moderate affinity, with high nucleotide exchange rates and a fairly low GTP hydrolysis rate. Plays a role in control of the cell cycle, stress response, ribosome biogenesis and in those bacteria that undergo differentiation, in morphogenesis control. This Francisella philomiragia subsp. philomiragia (strain ATCC 25017 / CCUG 19701 / FSC 153 / O#319-036) protein is GTPase Obg.